Here is a 184-residue protein sequence, read N- to C-terminus: Tumor necrosis factor receptor superfamily member 17 (184 aa).

Residues 1-54 (MLQMAGQCSQNEYFDSLLHACIPCQLRCSSNTPPLTCQRYCNASVTNSVKGTNA) lie on the Extracellular side of the membrane. The TNFR-Cys repeat unit spans residues 7 to 41 (QCSQNEYFDSLLHACIPCQLRCSSNTPPLTCQRYC). 3 cysteine pairs are disulfide-bonded: Cys-8–Cys-21, Cys-24–Cys-37, and Cys-28–Cys-41. The helical; Signal-anchor for type III membrane protein transmembrane segment at 55–77 (ILWTCLGLSLIISLAVFVLMFLL) threads the bilayer. Topologically, residues 78 to 184 (RKINSEPLKD…TEIEKSISAR (107 aa)) are cytoplasmic.

Associates with TRAF1, TRAF2, TRAF3, TRAF5 and TRAF6. As to expression, expressed in mature B-cells, but not in T-cells or monocytes.

The protein resides in the cell membrane. It is found in the endomembrane system. Functionally, receptor for TNFSF13B/BLyS/BAFF and TNFSF13/APRIL. Promotes B-cell survival and plays a role in the regulation of humoral immunity. Activates NF-kappa-B and JNK. The polypeptide is Tumor necrosis factor receptor superfamily member 17 (TNFRSF17) (Homo sapiens (Human)).